The following is a 336-amino-acid chain: Tetraacyldisaccharide 4'-kinase (336 aa).

60–67 (TVGGTGKT) contributes to the ATP binding site.

It belongs to the LpxK family.

It carries out the reaction a lipid A disaccharide + ATP = a lipid IVA + ADP + H(+). Its pathway is glycolipid biosynthesis; lipid IV(A) biosynthesis; lipid IV(A) from (3R)-3-hydroxytetradecanoyl-[acyl-carrier-protein] and UDP-N-acetyl-alpha-D-glucosamine: step 6/6. Functionally, transfers the gamma-phosphate of ATP to the 4'-position of a tetraacyldisaccharide 1-phosphate intermediate (termed DS-1-P) to form tetraacyldisaccharide 1,4'-bis-phosphate (lipid IVA). This is Tetraacyldisaccharide 4'-kinase from Pseudomonas fluorescens (strain ATCC BAA-477 / NRRL B-23932 / Pf-5).